Here is an 888-residue protein sequence, read N- to C-terminus: MAGAAAESGRELWTFAGSRDPSAPRLAYGYGPGSLRELRAREFSRLAGTVYLDHAGATLFSQSQLESFTSDLMENTYGNPHSQNISSKLTHDTVEQVRYRILAHFHTTAEDYTVIFTAGSTAALKLVAEAFPWVSQGPESSGSRFCYLTDSHTSVVGMRNVTMAINVISTPVRPEDLWSAEERSASASNPDCQLPHLFCYPAQSNFSGVRYPLSWIEEVKSGRLHPVSTPGKWFVLLDAASYVSTSPLDLSAHQADFVPISFYKIFGFPTGLGALLVHNRAAPLLRKTYFGGGTASAYLAGEDFYIPRQSVAQRFEDGTISFLDVIALKHGFDTLERLTGGMENIKQHTFTLAQYTYVALSSLQYPNGAPVVRIYSDSEFSSPEVQGPIINFNVLDDKGNIIGYSQVDKMASLYNIHLRTGCFCNTGACQRHLGISNEMVRKHFQAGHVCGDNMDLIDGQPTGSVRISFGYMSTLDDVQAFLRFIIDTRLHSSGDWPVPQAHADTGETGAPSADSQADVIPAVMGRRSLSPQEDALTGSRVWNNSSTVNAVPVAPPVCDVARTQPTPSEKAAGVLEGALGPHVVTNLYLYPIKSCAAFEVTRWPVGNQGLLYDRSWMVVNHNGVCLSQKQEPRLCLIQPFIDLRQRIMVIKAKGMEPIEVPLEENSERTQIRQSRVCADRVSTYDCGEKISSWLSTFFGRPCHLIKQSSNSQRNAKKKHGKDQLPGTMATLSLVNEAQYLLINTSSILELHRQLNTSDENGKEELFSLKDLSLRFRANIIINGKRAFEEEKWDEISIGSLRFQVLGPCHRCQMICIDQQTGQRNQHVFQKLSESRETKVNFGMYLMHASLDLSSPCFLSVGSQVLPVLKENVEGHDLPASEKHQDVTS.

At serine 34 the chain carries Phosphoserine. Lysine 264 bears the N6-(pyridoxal phosphate)lysine mark. Cysteine 424 is a catalytic residue. Serine 528 and serine 530 each carry phosphoserine. In terms of domain architecture, MOSC spans 706-867 (KQSSNSQRNA…LSVGSQVLPV (162 aa)).

The protein belongs to the class-V pyridoxal-phosphate-dependent aminotransferase family. MOCOS subfamily. Requires pyridoxal 5'-phosphate as cofactor.

The catalysed reaction is Mo-molybdopterin + L-cysteine + AH2 = thio-Mo-molybdopterin + L-alanine + A + H2O. It participates in cofactor biosynthesis; molybdopterin biosynthesis. Its function is as follows. Sulfurates the molybdenum cofactor. Sulfation of molybdenum is essential for xanthine dehydrogenase (XDH) and aldehyde oxidase (ADO) enzymes in which molybdenum cofactor is liganded by 1 oxygen and 1 sulfur atom in active form. In vitro, the C-terminal domain is able to reduce N-hydroxylated prodrugs, such as benzamidoxime. This chain is Molybdenum cofactor sulfurase, found in Homo sapiens (Human).